The primary structure comprises 109 residues: MEVKAIVKDTGYSALKVRLCVDMVRGKKVSEAITMLRFMTSPTAKVVSKVIKSAAANAENNFQMNPADLKISQIYADEARMLKRMRPQARGRVSPILKRSSHITVVVAD.

It belongs to the universal ribosomal protein uL22 family. In terms of assembly, part of the 50S ribosomal subunit.

In terms of biological role, this protein binds specifically to 23S rRNA; its binding is stimulated by other ribosomal proteins, e.g. L4, L17, and L20. It is important during the early stages of 50S assembly. It makes multiple contacts with different domains of the 23S rRNA in the assembled 50S subunit and ribosome. Its function is as follows. The globular domain of the protein is located near the polypeptide exit tunnel on the outside of the subunit, while an extended beta-hairpin is found that lines the wall of the exit tunnel in the center of the 70S ribosome. This Dehalococcoides mccartyi (strain ATCC BAA-2266 / KCTC 15142 / 195) (Dehalococcoides ethenogenes (strain 195)) protein is Large ribosomal subunit protein uL22.